We begin with the raw amino-acid sequence, 291 residues long: Short-chain dehydrogenase/reductase GME11359 (291 aa).

Leucine 18, aspartate 67, asparagine 96, tyrosine 177, lysine 181, and valine 209 together coordinate NADP(+). The Proton acceptor role is filled by tyrosine 177. Lysine 181 (lowers pKa of active site Tyr) is an active-site residue.

This sequence belongs to the short-chain dehydrogenases/reductases (SDR) family.

Its pathway is secondary metabolite biosynthesis. Its function is as follows. Short-chain dehydrogenase/reductase; part of the gene cluster that mediates the biosynthesis of dibenzodioxocinones such as pestalotiollide B, a novel class of inhibitors against cholesterol ester transfer protein (CEPT). The biosynthesis initiates from condensation of acetate and malonate units catalyzed by the non-reducing PKS pks8/GME11356. Pks8/GME11356 lacks a thioesterase (TE) domain, which is important to the cyclizing of the third ring of atrochrysone carboxylic acid, and the esterase GME11355 might play the role of TE and catalyzes the cyclization reaction of the C ring. The lactamase-like protein GME11357 (or other beta-lactamases in Pestalotiopsis microspora) probably hydrolyzes the thioester bond between the ACP of pks8/GME11356 and the intermediate to release atrochrysone carboxylic acid, which is spontaneously dehydrates to form endocrocin anthrone. Endocrocin anthrone is further converted to emodin via the endocrocin intermediate. Emodin is then oxidized by several enzymes such as the Baeyer-Villiger oxidase GME11358, the oxidoreductase GME11367, the short chain dehydrogenase/reductase GME11373, as well as by other oxidoreductases from the cluster, to modify the A and C rings and open the B ring, and finally yield monodictyphenone. The prenyltransferase GME11375 may catalyze the addition reaction between the C5 side chains and the carbon bone of dibenzodioxocinones. The remaining biochemical reactions to the final product dibenzodioxocinones should be methylation catalyzed by methyltransferase GME11366 and reduction and lactonization reaction catalyzed by a series of oxidordeuctases. In Pestalotiopsis microspora, this protein is Short-chain dehydrogenase/reductase GME11359.